We begin with the raw amino-acid sequence, 137 residues long: Crustacean hyperglycemic hormones (137 aa).

Residues 1 to 28 (MVSFRTMWSLVVVVVVVAASLGSSGVHG) form the signal peptide. Glutamine 64 is modified (pyrrolidone carboxylic acid). D-phenylalanine; in form CHH-II is present on phenylalanine 66. Cystine bridges form between cysteine 70–cysteine 106, cysteine 86–cysteine 102, and cysteine 89–cysteine 115. Valine 135 carries the valine amide modification.

The protein belongs to the arthropod CHH/MIH/GIH/VIH hormone family. As to expression, produced by the medulla terminalis X-organ in the eyestalks and transported to the sinus gland where they are stored and released.

Its subcellular location is the secreted. In terms of biological role, hormone found in the sinus gland of isopods and decapods which controls the blood sugar level. Has a secretagogue action over the amylase released from the midgut gland. May act as a stress hormone and may be involved in the control of molting and reproduction. This is Crustacean hyperglycemic hormones from Procambarus clarkii (Red swamp crayfish).